Reading from the N-terminus, the 148-residue chain is Ribonuclease pancreatic (148 aa).

The first 25 residues, 1–25, serve as a signal peptide directing secretion; sequence MGLEKSLMLFPLLVLVLGLVQPSLG. The substrate site is built by Lys32 and Arg35. Residue His37 is the Proton acceptor of the active site. Disulfide bonds link Cys50/Cys108, Cys64/Cys119, Cys82/Cys134, and Cys89/Cys96. Substrate-binding positions include 65–69, Lys90, and Arg109; that span reads KPVNT. The Proton donor role is filled by His143.

It belongs to the pancreatic ribonuclease family. As to quaternary structure, monomer. Interacts with and forms tight 1:1 complexes with RNH1. Dimerization of two such complexes may occur. Interaction with RNH1 inhibits this protein. Pancreas.

It is found in the secreted. The catalysed reaction is an [RNA] containing cytidine + H2O = an [RNA]-3'-cytidine-3'-phosphate + a 5'-hydroxy-ribonucleotide-3'-[RNA].. It carries out the reaction an [RNA] containing uridine + H2O = an [RNA]-3'-uridine-3'-phosphate + a 5'-hydroxy-ribonucleotide-3'-[RNA].. Its function is as follows. Endonuclease that catalyzes the cleavage of RNA on the 3' side of pyrimidine nucleotides. Acts on single-stranded and double-stranded RNA. The protein is Ribonuclease pancreatic (RNASE1) of Gerbilliscus gambianus (Gambian gerbil).